Consider the following 84-residue polypeptide: Agaphelin (84 aa).

A signal peptide spans 1 to 26 (MKMRVHLLAVSVLLVVLALQTTPAEA). Residues 29 to 82 (NSEMATCACQLIYRPVCASNNESYSNECVLKCASETPTGRSIGLHKVKDGNCNG) enclose the Kazal-like domain. Cystine bridges form between Cys-35-Cys-60, Cys-37-Cys-56, and Cys-45-Cys-80. N-linked (GlcNAc...) asparagine glycosylation is present at Asn-49.

As to quaternary structure, interacts with human ELANE.

The protein localises to the secreted. In terms of biological role, functions as a slow and tight inhibitor of host neutrophil elastase (ELANE). Inhibits host proteinase 3 (PRTN3) and chymotrypsin. Does not inhibit other host proteases involved in coagulation or inflammation, such as cathepsin G (CTSG), trypsin, chymase, matriptase, beta-tryptase, kallikrein, urokinase-type plasminogen activator (PLAU), coagulation factors Xa (F10), XIa (F11), XIIa (F12), plasmin (PLG), thrombin (F2) and tissue-type plasminogen activator (PLAT). Inhibits host neutrophil chemotaxis induced by N-formylmethionine-leucyl-phenylalanine (fMLP) in vitro. Inhibits ELANE-mediated potentiation of platelet aggregation induced by CTSG in the host. Does not affect CTSG- or collagen-induced platelet aggregation. Blocks cleavage of tissue factor pathway inhibitor (TFPI) by ELANE in the host. Inhibits neutrophil-induced coagulation in the host by interfering with neutrophil extracellular traps (NET) formation. Exhibits anti-inflammatory activity. Reduces ischemia-induced activation of MAPK and NF-kappa-B pathways in the host. Decreases CCL2 and IL8 production in IL4- or lipopolysaccharide (LPS)-stimulated host epithelial cells. Reduces caspase-3 (CASP3)-dependent apoptosis in damaged host tissues. This chain is Agaphelin, found in Anopheles gambiae (African malaria mosquito).